A 343-amino-acid chain; its full sequence is GTPase Obg (343 aa).

The Obg domain occupies Met-1–Leu-159. The 175-residue stretch at Ala-160–Gln-334 folds into the OBG-type G domain. GTP contacts are provided by residues Gly-166–Ser-173, Phe-191–Tyr-195, Asp-213–Gly-216, Asn-284–Asp-287, and Ser-315–Leu-317. Mg(2+) contacts are provided by Ser-173 and Thr-193.

The protein belongs to the TRAFAC class OBG-HflX-like GTPase superfamily. OBG GTPase family. As to quaternary structure, monomer. Requires Mg(2+) as cofactor.

The protein localises to the cytoplasm. Its function is as follows. An essential GTPase which binds GTP, GDP and possibly (p)ppGpp with moderate affinity, with high nucleotide exchange rates and a fairly low GTP hydrolysis rate. Plays a role in control of the cell cycle, stress response, ribosome biogenesis and in those bacteria that undergo differentiation, in morphogenesis control. The chain is GTPase Obg from Nitrosomonas europaea (strain ATCC 19718 / CIP 103999 / KCTC 2705 / NBRC 14298).